The primary structure comprises 299 residues: ATP phosphoribosyltransferase (299 aa).

It belongs to the ATP phosphoribosyltransferase family. Long subfamily. In terms of assembly, equilibrium between an active dimeric form, an inactive hexameric form and higher aggregates. Interconversion between the various forms is largely reversible and is influenced by the natural substrates and inhibitors of the enzyme. Mg(2+) serves as cofactor.

The protein resides in the cytoplasm. It carries out the reaction 1-(5-phospho-beta-D-ribosyl)-ATP + diphosphate = 5-phospho-alpha-D-ribose 1-diphosphate + ATP. It functions in the pathway amino-acid biosynthesis; L-histidine biosynthesis; L-histidine from 5-phospho-alpha-D-ribose 1-diphosphate: step 1/9. Feedback inhibited by histidine. Catalyzes the condensation of ATP and 5-phosphoribose 1-diphosphate to form N'-(5'-phosphoribosyl)-ATP (PR-ATP). Has a crucial role in the pathway because the rate of histidine biosynthesis seems to be controlled primarily by regulation of HisG enzymatic activity. This Salmonella dublin (strain CT_02021853) protein is ATP phosphoribosyltransferase.